Reading from the N-terminus, the 115-residue chain is Large ribosomal subunit protein bL19 (115 aa).

This sequence belongs to the bacterial ribosomal protein bL19 family.

Its function is as follows. This protein is located at the 30S-50S ribosomal subunit interface and may play a role in the structure and function of the aminoacyl-tRNA binding site. The protein is Large ribosomal subunit protein bL19 of Hydrogenovibrio crunogenus (strain DSM 25203 / XCL-2) (Thiomicrospira crunogena).